We begin with the raw amino-acid sequence, 402 residues long: NAD-dependent protein deacetylase sirtuin-7 (402 aa).

Positions 1–23 (MAAGGGLSRSERKAAERVRRLRE) are disordered. Residues 9–23 (RSERKAAERVRRLRE) show a composition bias toward basic and acidic residues. A Deacetylase sirtuin-type domain is found at 83–330 (PEELRRKVRE…QLLMNELGLE (248 aa)). NAD(+) is bound by residues 108 to 127 (GAGI…NGVW) and 168 to 171 (QNCD). His188 serves as the catalytic Proton acceptor. Zn(2+) contacts are provided by Cys196, Cys199, Cys226, and Cys229. Residues 269–271 (GSS), 298–300 (NLQ), and Cys316 each bind NAD(+). Residues 355–402 (SHSRKSLCRSREEAPPGDQSDPLASAPPILGGWFGRGCAKRAKRKKVA) form a disordered region. Position 390 is an asymmetric dimethylarginine; alternate (Arg390). Position 390 is an omega-N-methylarginine; alternate (Arg390). Basic residues predominate over residues 392–402 (CAKRAKRKKVA).

The protein belongs to the sirtuin family. Class IV subfamily. Interacts with UBTF and the RNA polymerase I complex. Interacts with components of the B-WICH complex, such as MYBBP1A, SMARCA5/SNF2H and BAZ1B/WSTF. Interacts with ELK4, leading to stabilization at target promoters for H3K18Ac deacetylation. Interacts with histone H2A and/or histone H2B. Interacts with DNMT1. Interacts with SIRT1. Zn(2+) serves as cofactor. Phosphorylated during mitosis. In terms of processing, methylation at Arg-390 by PRMT6 inhibits the H3K18Ac histone deacetylase activity, promoting mitochondria biogenesis and maintaining mitochondria respiration. Post-translationally, ubiquitinated via 'Lys-63'-linked ubiquitin chains. Deubiquitinated by USP7, inhibiting the H3K18Ac histone deacetylase activity and regulating gluconeogenesis. Ubiquitinated by E3 ubiquitin-protein ligase complex containing FBXO7; leading to proteasomal degradation. Detected in liver, spleen and testis. Detected in embryos.

The protein localises to the nucleus. It localises to the nucleolus. It is found in the nucleoplasm. The protein resides in the chromosome. Its subcellular location is the cytoplasm. It catalyses the reaction N(6)-acetyl-L-lysyl-[protein] + NAD(+) + H2O = 2''-O-acetyl-ADP-D-ribose + nicotinamide + L-lysyl-[protein]. It carries out the reaction N(6)-glutaryl-L-lysyl-[protein] + NAD(+) + H2O = 2''-O-glutaryl-ADP-D-ribose + nicotinamide + L-lysyl-[protein]. The catalysed reaction is N(6)-succinyl-L-lysyl-[protein] + NAD(+) + H2O = 2''-O-succinyl-ADP-D-ribose + nicotinamide + L-lysyl-[protein]. The enzyme catalyses N(6)-propanoyl-L-lysyl-[protein] + NAD(+) + H2O = 3''-O-propanoyl-ADP-D-ribose + nicotinamide + L-lysyl-[protein]. It catalyses the reaction N(6)-decanoyl-L-lysyl-[protein] + NAD(+) + H2O = 2''-O-decanoyl-ADP-D-ribose + nicotinamide + L-lysyl-[protein]. Its activity is regulated as follows. NAD-dependent protein-lysine deacetylase and deacylase activities are activated by nucleic acids. Histone deacetylase activity is activated by DNA. Protein-lysine deacylase activity is activated by RNA. H3K18Ac histone deacetylase activity is inhibited by methylation at Arg-390. H3K18Ac histone deacetylase activity is inhibited by deubiquitination by USP7. NAD-dependent protein-lysine deacylase that can act both as a deacetylase or deacylase (desuccinylase, depropionylase and deglutarylase), depending on the context. Also acts as a dedecanoylase. Specifically mediates deacetylation of histone H3 at 'Lys-18' (H3K18Ac). In contrast to other histone deacetylases, displays strong preference for a specific histone mark, H3K18Ac, directly linked to control of gene expression. H3K18Ac is mainly present around the transcription start site of genes and has been linked to activation of nuclear hormone receptors; SIRT7 thereby acts as a transcription repressor. Moreover, H3K18 hypoacetylation has been reported as a marker of malignancy in various cancers and seems to maintain the transformed phenotype of cancer cells. Also able to mediate deacetylation of histone H3 at 'Lys-36' (H3K36Ac) in the context of nucleosomes. Also mediates deacetylation of non-histone proteins, such as ATM, CDK9, DDX21, DDB1, FBL, FKBP5/FKBP51, GABPB1, RAN, RRP9/U3-55K and POLR1E/PAF53. Enriched in nucleolus where it stimulates transcription activity of the RNA polymerase I complex. Acts by mediating the deacetylation of the RNA polymerase I subunit POLR1E/PAF53, thereby promoting the association of RNA polymerase I with the rDNA promoter region and coding region. In response to metabolic stress, SIRT7 is released from nucleoli leading to hyperacetylation of POLR1E/PAF53 and decreased RNA polymerase I transcription. Required to restore the transcription of ribosomal RNA (rRNA) at the exit from mitosis. Promotes pre-ribosomal RNA (pre-rRNA) cleavage at the 5'-terminal processing site by mediating deacetylation of RRP9/U3-55K, a core subunit of the U3 snoRNP complex. Mediates 'Lys-37' deacetylation of Ran, thereby regulating the nuclear export of NF-kappa-B subunit RELA/p65. Acts as a regulator of DNA damage repair by mediating deacetylation of ATM during the late stages of DNA damage response, promoting ATM dephosphorylation and deactivation. May also deacetylate p53/TP53 and promotes cell survival, however such data need additional confirmation. Suppresses the activity of the DCX (DDB1-CUL4-X-box) E3 ubiquitin-protein ligase complexes by mediating deacetylation of DDB1, which prevents the interaction between DDB1 and CUL4 (CUL4A or CUL4B). Activates RNA polymerase II transcription by mediating deacetylation of CDK9, thereby promoting 'Ser-2' phosphorylation of the C-terminal domain (CTD) of RNA polymerase II. Deacetylates FBL, promoting histone-glutamine methyltransferase activity of FBL. Acts as a regulator of mitochondrial function by catalyzing deacetylation of GABPB1. Regulates Akt/AKT1 activity by mediating deacetylation of FKBP5/FKBP51. Required to prevent R-loop-associated DNA damage and transcription-associated genomic instability by mediating deacetylation and subsequent activation of DDX21, thereby overcoming R-loop-mediated stalling of RNA polymerases. In addition to protein deacetylase activity, also acts as protein-lysine deacylase. Acts as a protein depropionylase by mediating depropionylation of Osterix (SP7), thereby regulating bone formation by osteoblasts. Acts as a histone deglutarylase by mediating deglutarylation of histone H4 on 'Lys-91' (H4K91glu); a mark that destabilizes nucleosomes by promoting dissociation of the H2A-H2B dimers from nucleosomes. Acts as a histone desuccinylase: in response to DNA damage, recruited to DNA double-strand breaks (DSBs) and catalyzes desuccinylation of histone H3 on 'Lys-122' (H3K122succ), thereby promoting chromatin condensation and DSB repair. Also promotes DSB repair by promoting H3K18Ac deacetylation, regulating non-homologous end joining (NHEJ). Along with its role in DNA repair, required for chromosome synapsis during prophase I of female meiosis by catalyzing H3K18Ac deacetylation. Involved in transcriptional repression of LINE-1 retrotransposon via H3K18Ac deacetylation, and promotes their association with the nuclear lamina. Required to stabilize ribosomal DNA (rDNA) heterochromatin and prevent cellular senescence induced by rDNA instability. Acts as a negative regulator of SIRT1 by preventing autodeacetylation of SIRT1, restricting SIRT1 deacetylase activity. This Mus musculus (Mouse) protein is NAD-dependent protein deacetylase sirtuin-7.